The chain runs to 361 residues: Phospho-N-acetylmuramoyl-pentapeptide-transferase (361 aa).

10 helical membrane-spanning segments follow: residues 25–45 (TGGA…WIID), 72–92 (TPTM…LLWA), 95–115 (LNPY…VGFY), 135–155 (LLIE…LGRA), 169–189 (VMLN…VGAG), 200–220 (GLAI…SYLA), 240–260 (LAVL…FNAP), 264–284 (IFMG…IAVA), 289–309 (IVLA…IVQV), and 338–358 (QIVI…LSTL).

The protein belongs to the glycosyltransferase 4 family. MraY subfamily. Requires Mg(2+) as cofactor.

The protein resides in the cell inner membrane. The enzyme catalyses UDP-N-acetyl-alpha-D-muramoyl-L-alanyl-gamma-D-glutamyl-meso-2,6-diaminopimeloyl-D-alanyl-D-alanine + di-trans,octa-cis-undecaprenyl phosphate = di-trans,octa-cis-undecaprenyl diphospho-N-acetyl-alpha-D-muramoyl-L-alanyl-D-glutamyl-meso-2,6-diaminopimeloyl-D-alanyl-D-alanine + UMP. The protein operates within cell wall biogenesis; peptidoglycan biosynthesis. Functionally, catalyzes the initial step of the lipid cycle reactions in the biosynthesis of the cell wall peptidoglycan: transfers peptidoglycan precursor phospho-MurNAc-pentapeptide from UDP-MurNAc-pentapeptide onto the lipid carrier undecaprenyl phosphate, yielding undecaprenyl-pyrophosphoryl-MurNAc-pentapeptide, known as lipid I. The polypeptide is Phospho-N-acetylmuramoyl-pentapeptide-transferase (Rhodopseudomonas palustris (strain ATCC BAA-98 / CGA009)).